A 232-amino-acid chain; its full sequence is Enolase-phosphatase E1 (232 aa).

It belongs to the HAD-like hydrolase superfamily. MasA/MtnC family. Monomer. Requires Mg(2+) as cofactor.

It catalyses the reaction 5-methylsulfanyl-2,3-dioxopentyl phosphate + H2O = 1,2-dihydroxy-5-(methylsulfanyl)pent-1-en-3-one + phosphate. It participates in amino-acid biosynthesis; L-methionine biosynthesis via salvage pathway; L-methionine from S-methyl-5-thio-alpha-D-ribose 1-phosphate: step 3/6. It functions in the pathway amino-acid biosynthesis; L-methionine biosynthesis via salvage pathway; L-methionine from S-methyl-5-thio-alpha-D-ribose 1-phosphate: step 4/6. Its function is as follows. Bifunctional enzyme that catalyzes the enolization of 2,3-diketo-5-methylthiopentyl-1-phosphate (DK-MTP-1-P) into the intermediate 2-hydroxy-3-keto-5-methylthiopentenyl-1-phosphate (HK-MTPenyl-1-P), which is then dephosphorylated to form the acireductone 1,2-dihydroxy-3-keto-5-methylthiopentene (DHK-MTPene). The polypeptide is Enolase-phosphatase E1 (Xanthomonas campestris pv. campestris (strain 8004)).